Reading from the N-terminus, the 165-residue chain is Leukotoxin-activating lysine-acyltransferase LktC (165 aa).

Catalysis depends on residues histidine 22 and aspartate 91.

Belongs to the RTX toxin acyltransferase family.

Its subcellular location is the cytoplasm. It carries out the reaction a fatty acyl-[ACP] + L-lysyl-[protein] = N(6)-(fatty acyl)-L-lysyl-[protein] + holo-[ACP] + H(+). Involved in fatty acylation of the protoxin (LktA) at two internal lysine residues, thereby converting it to the active toxin. This Pasteurella haemolytica-like sp. (strain 5943B) protein is Leukotoxin-activating lysine-acyltransferase LktC (lktC).